Consider the following 275-residue polypeptide: 2,3,4,5-tetrahydropyridine-2,6-dicarboxylate N-succinyltransferase (275 aa).

Residues Arg-104 and Asp-141 each contribute to the substrate site.

It belongs to the transferase hexapeptide repeat family. In terms of assembly, homotrimer.

It localises to the cytoplasm. It carries out the reaction (S)-2,3,4,5-tetrahydrodipicolinate + succinyl-CoA + H2O = (S)-2-succinylamino-6-oxoheptanedioate + CoA. It functions in the pathway amino-acid biosynthesis; L-lysine biosynthesis via DAP pathway; LL-2,6-diaminopimelate from (S)-tetrahydrodipicolinate (succinylase route): step 1/3. This chain is 2,3,4,5-tetrahydropyridine-2,6-dicarboxylate N-succinyltransferase, found in Actinobacillus succinogenes (strain ATCC 55618 / DSM 22257 / CCUG 43843 / 130Z).